Reading from the N-terminus, the 237-residue chain is Proteasome subunit beta 2 (237 aa).

Residues 1–14 are compositionally biased toward polar residues; the sequence is MNNWSQGSTPQGSD. The propeptide at 1–42 is removed in mature form; by autocatalysis; sequence MNNWSQGSTPQGSDPSPYAPELGSLPDGSQSDDHGDTVNKTG. Residues 1–45 form a disordered region; it reads MNNWSQGSTPQGSDPSPYAPELGSLPDGSQSDDHGDTVNKTGTTT. The active-site Nucleophile is the T43.

The protein belongs to the peptidase T1B family. The 20S proteasome core is composed of 14 alpha and 14 beta subunits that assemble into four stacked heptameric rings, resulting in a barrel-shaped structure. The two inner rings, each composed of seven catalytic beta subunits, are sandwiched by two outer rings, each composed of seven alpha subunits. The catalytic chamber with the active sites is on the inside of the barrel. Has a gated structure, the ends of the cylinder being occluded by the N-termini of the alpha-subunits. Is capped at one or both ends by the proteasome regulatory ATPase, PAN.

Its subcellular location is the cytoplasm. It carries out the reaction Cleavage of peptide bonds with very broad specificity.. Its activity is regulated as follows. The formation of the proteasomal ATPase PAN-20S proteasome complex, via the docking of the C-termini of PAN into the intersubunit pockets in the alpha-rings, triggers opening of the gate for substrate entry. Interconversion between the open-gate and close-gate conformations leads to a dynamic regulation of the 20S proteasome proteolysis activity. Its function is as follows. Component of the proteasome core, a large protease complex with broad specificity involved in protein degradation. The chain is Proteasome subunit beta 2 from Haloterrigena turkmenica (strain ATCC 51198 / DSM 5511 / JCM 9101 / NCIMB 13204 / VKM B-1734 / 4k) (Halococcus turkmenicus).